The chain runs to 61 residues: Small ribosomal subunit protein uS14 (61 aa).

Positions 24, 27, 40, and 43 each coordinate Zn(2+).

This sequence belongs to the universal ribosomal protein uS14 family. Zinc-binding uS14 subfamily. Part of the 30S ribosomal subunit. Contacts proteins S3 and S10. Zn(2+) is required as a cofactor.

Its function is as follows. Binds 16S rRNA, required for the assembly of 30S particles and may also be responsible for determining the conformation of the 16S rRNA at the A site. The chain is Small ribosomal subunit protein uS14 from Helicobacter pylori (strain J99 / ATCC 700824) (Campylobacter pylori J99).